The chain runs to 404 residues: Trigger factor (404 aa).

The region spanning 160–225 (KDHLFVRTEE…VLEVKTLKLP (66 aa)) is the PPIase FKBP-type domain.

It belongs to the FKBP-type PPIase family. Tig subfamily.

The protein resides in the cytoplasm. It catalyses the reaction [protein]-peptidylproline (omega=180) = [protein]-peptidylproline (omega=0). Functionally, involved in protein export. Acts as a chaperone by maintaining the newly synthesized protein in an open conformation. Functions as a peptidyl-prolyl cis-trans isomerase. This Thermus thermophilus (strain ATCC BAA-163 / DSM 7039 / HB27) protein is Trigger factor.